A 758-amino-acid chain; its full sequence is MAVSARSARSPPDSDKVQKDKAGQTSGRRQGSRMGKLLGFEWTDVSSWGKLVTLLNRPTDPASLAVFRFLFGLMMVLDIPQERGLSSLDRRYLDGLEVCRFPLLDALQPLPLDWMYLVYTIMFLGALGMMLGLRYRISCVLFLLPYWYVFLLDKTSWNNHSYLYGLLAFQLTFMDANRYWSVDGLLSARKRNAHVPLWNYAVLRGQIFIVYFIAGVKKLDADWVEGYSMEYLSRHWLFSPFKFVLSEEMTSLLVVHWCGLLLDLSAGFLLFFDASRSIGLLFVSYFHCMNSQLFSIGMFPYVMLASSPLFCSPEWPRKLVAHCPKRLQELLPLRTAPQPSASCVYKRSRAKGGQKPGLRHRLGAAFTLLYLLEQLFLPYSHFLTQGYNNWTNGLYGYSWDMMVHSRSHQHVKITYRDGRTGELGYLNPGVFTQSRRWKDHADMLKQYATCLSRLLPKYNVTEPQIYFDIWVSINDRFQQRIFDPRVDIVQATWSPFQRTPWLQPLLMDLSPWRTKLQEIKSSLDNHTEVVFIADFPGLHLENFVSEDLGNTSIQLLQGEVTVELVAEQKNQTLQEGEKMQLPAGEYHKVYTMSPSPSCYMYIYVNTTELALEQDLAYLQELKEKVENGSETEPLPPELQPLLEGEVKGGPEPTPLVQTFLRRQQRLQEIERRRNAPFHERLLRFLLRKLYVFRRSFLMTCISLRNLVLGRPSLEQLAQEVTYANLRPFEPVGEPSPSNTDSSNPNPSEPNADAVHSEF.

Residues 1–31 are disordered; that stretch reads MAVSARSARSPPDSDKVQKDKAGQTSGRRQG. N-acetylalanine is present on Ala2. Topologically, residues 2 to 60 are cytoplasmic; the sequence is AVSARSARSPPDSDKVQKDKAGQTSGRRQGSRMGKLLGFEWTDVSSWGKLVTLLNRPTD. Over residues 12–22 the composition is skewed to basic and acidic residues; sequence PDSDKVQKDKA. The helical transmembrane segment at 61 to 81 threads the bilayer; that stretch reads PASLAVFRFLFGLMMVLDIPQ. Residues 82–113 are Lumenal-facing; sequence ERGLSSLDRRYLDGLEVCRFPLLDALQPLPLD. Cysteines 99 and 450 form a disulfide. The chain crosses the membrane as a helical span at residues 114–134; it reads WMYLVYTIMFLGALGMMLGLR. The Cytoplasmic segment spans residues 135–136; the sequence is YR. The helical transmembrane segment at 137-157 threads the bilayer; that stretch reads ISCVLFLLPYWYVFLLDKTSW. The Lumenal segment spans residues 158 to 292; the sequence is NNHSYLYGLL…VSYFHCMNSQ (135 aa). Residues 293–313 traverse the membrane as a helical segment; it reads LFSIGMFPYVMLASSPLFCSP. At 314-361 the chain is on the cytoplasmic side; sequence EWPRKLVAHCPKRLQELLPLRTAPQPSASCVYKRSRAKGGQKPGLRHR. The helical transmembrane segment at 362 to 382 threads the bilayer; it reads LGAAFTLLYLLEQLFLPYSHF. At 383-758 the chain is on the lumenal side; the sequence is LTQGYNNWTN…PNADAVHSEF (376 aa). Positions 727 to 758 are disordered; that stretch reads PFEPVGEPSPSNTDSSNPNPSEPNADAVHSEF. Low complexity predominate over residues 734–750; the sequence is PSPSNTDSSNPNPSEPN.

This sequence belongs to the vitamin K-dependent gamma-carboxylase family. As to quaternary structure, monomer. May interact with CALU.

The protein resides in the endoplasmic reticulum membrane. It catalyses the reaction 4-carboxy-L-glutamyl-[protein] + 2,3-epoxyphylloquinone + H2O + H(+) = phylloquinol + L-glutamyl-[protein] + CO2 + O2. Functionally, mediates the vitamin K-dependent carboxylation of glutamate residues to calcium-binding gamma-carboxyglutamate (Gla) residues with the concomitant conversion of the reduced hydroquinone form of vitamin K to vitamin K epoxide. Catalyzes gamma-carboxylation of various proteins, such as blood coagulation factors (F2, F7, F9 and F10), osteocalcin (BGLAP) or matrix Gla protein (MGP). This Delphinapterus leucas (Beluga whale) protein is Vitamin K-dependent gamma-carboxylase (GGCX).